The sequence spans 335 residues: Protein-glutamate methylesterase/protein-glutamine glutaminase 3 (335 aa).

Residues 2–119 (RIGIVNDMPL…GNPQTAAAPL (118 aa)) form the Response regulatory domain. Asp-53 carries the 4-aspartylphosphate modification. One can recognise a CheB-type methylesterase domain in the interval 144–335 (PKAGGARQRL…IAPRLAEVFD (192 aa)). Residues Ser-159, His-186, and Asp-279 contribute to the active site.

Belongs to the CheB family. In terms of processing, phosphorylated by CheA. Phosphorylation of the N-terminal regulatory domain activates the methylesterase activity.

It is found in the cytoplasm. It catalyses the reaction [protein]-L-glutamate 5-O-methyl ester + H2O = L-glutamyl-[protein] + methanol + H(+). It carries out the reaction L-glutaminyl-[protein] + H2O = L-glutamyl-[protein] + NH4(+). In terms of biological role, involved in chemotaxis. Part of a chemotaxis signal transduction system that modulates chemotaxis in response to various stimuli. Catalyzes the demethylation of specific methylglutamate residues introduced into the chemoreceptors (methyl-accepting chemotaxis proteins or MCP) by CheR. Also mediates the irreversible deamidation of specific glutamine residues to glutamic acid. This Pseudomonas aeruginosa (strain ATCC 15692 / DSM 22644 / CIP 104116 / JCM 14847 / LMG 12228 / 1C / PRS 101 / PAO1) protein is Protein-glutamate methylesterase/protein-glutamine glutaminase 3.